A 97-amino-acid polypeptide reads, in one-letter code: Mitochondrial import inner membrane translocase subunit Tim8 A (97 aa).

The Twin CX3C motif signature appears at 43-66; the sequence is CWEKCMDKPGPKLDSRAEACFVNC. 2 disulfides stabilise this stretch: cysteine 43–cysteine 66 and cysteine 47–cysteine 62. 4 positions are modified to phosphoserine: serine 57, serine 87, serine 94, and serine 96.

It belongs to the small Tim family. As to quaternary structure, heterohexamer; composed of 3 copies of TIMM8A and 3 copies of TIMM13, named soluble 70 kDa complex. Associates with the TIM22 complex, whose core is composed of TIMM22.

It is found in the mitochondrion inner membrane. Its function is as follows. Mitochondrial intermembrane chaperone that participates in the import and insertion of some multi-pass transmembrane proteins into the mitochondrial inner membrane. Also required for the transfer of beta-barrel precursors from the TOM complex to the sorting and assembly machinery (SAM complex) of the outer membrane. Acts as a chaperone-like protein that protects the hydrophobic precursors from aggregation and guide them through the mitochondrial intermembrane space. The TIMM8-TIMM13 complex mediates the import of proteins such as TIMM23, SLC25A12/ARALAR1 and SLC25A13/ARALAR2, while the predominant TIMM9-TIMM10 70 kDa complex mediates the import of much more proteins. This chain is Mitochondrial import inner membrane translocase subunit Tim8 A (Timm8a), found in Rattus norvegicus (Rat).